Here is an 857-residue protein sequence, read N- to C-terminus: DNA mismatch repair protein MutS (857 aa).

608-615 (GPNMSGKS) is a binding site for ATP.

It belongs to the DNA mismatch repair MutS family.

Functionally, this protein is involved in the repair of mismatches in DNA. It is possible that it carries out the mismatch recognition step. This protein has a weak ATPase activity. This is DNA mismatch repair protein MutS from Lactobacillus gasseri (strain ATCC 33323 / DSM 20243 / BCRC 14619 / CIP 102991 / JCM 1131 / KCTC 3163 / NCIMB 11718 / NCTC 13722 / AM63).